A 394-amino-acid chain; its full sequence is Guanine nucleotide-binding protein G(s) subunit alpha (394 aa).

Residues 1-25 (MGCLGDSKTEDQRNEEKAQREANKK) form a disordered region. Gly2 carries the N-palmitoyl glycine lipid modification. The S-palmitoyl cysteine moiety is linked to residue Cys3. A compositionally biased stretch (basic and acidic residues) spans 7 to 25 (SKTEDQRNEEKAQREANKK). The G-alpha domain occupies 39 to 394 (ATHRLLLLGA…RMHLRQYELL (356 aa)). Residues 42–55 (RLLLLGAGESGKST) form a G1 motif region. 47 to 55 (GAGESGKST) lines the GTP pocket. Ser54 is a binding site for Mg(2+). Positions 68 to 90 (FNGEGGEEDPQAARSNSDGEKAT) are disordered. A G2 motif region spans residues 196 to 204 (DLLRCRVLT). Residues 197 to 204 (LLRCRVLT), 223 to 227 (DVGGQ), 292 to 295 (NKQD), and Ala366 each bind GTP. Residue Thr204 coordinates Mg(2+). Positions 219 to 228 (FHMFDVGGQR) are G3 motif. Positions 288 to 295 (ILFLNKQD) are G4 motif. The interval 364–369 (TCAVDT) is G5 motif.

The protein belongs to the G-alpha family. G(s) subfamily. Heterotrimeric G proteins are composed of 3 units; alpha, beta and gamma. The alpha chain contains the guanine nucleotide binding site. Interacts with CRY1; the interaction may block GPCR-mediated regulation of cAMP concentrations. Interacts with ADCY6 and stimulates its adenylyl cyclase activity. Interacts with ADCY2 and ADCY5. Stimulates the ADCY5 adenylyl cyclase activity. Interaction with SASH1.

The protein localises to the cell membrane. In terms of biological role, guanine nucleotide-binding proteins (G proteins) function as transducers in numerous signaling pathways controlled by G protein-coupled receptors (GPCRs). Signaling involves the activation of adenylyl cyclases, resulting in increased levels of the signaling molecule cAMP. GNAS functions downstream of several GPCRs, including beta-adrenergic receptors. Stimulates the Ras signaling pathway via RAPGEF2. This is Guanine nucleotide-binding protein G(s) subunit alpha (GNAS) from Cricetulus longicaudatus (Long-tailed dwarf hamster).